Reading from the N-terminus, the 751-residue chain is MAFQAVCILVGVFVCSTYVKGSPQPQARVYLTFDELRETKTSEYFSLSQYPLDYRILLMDEDQDRMYVGSKDHILSLNINNISQEPLSVFWPASAIKVEECKMAGKDPTHGCGNFVRVIQAFNRTHLYVCGSGAFSPVCAYLNRGRRSEDQVFMIDSKCESGKGRCSFNPNVNTVSVMINEELFSGMYIDFMGTDAAIFRSLTKRNAVRTDQHNSKWLSEPMFVDAHVIPDGTDPNDAKVYFFFKEKLTDNSRSTKQIHSMIARICPNDTGGLRSLVNKWTTFLKARLVCSVTDEDGPETHFDELEDVFLLEMDNPRTTLVYGIFTTSSSVFKGSAVCVYHFSDIQTVFNGPFAHKEGPNHQLISYQGRIPYPRPGTCPGGAFTPNMRTTKEFPDDVVTFIRNHPLMYNSIYPVHRRPLIVRIGTDYKYTKIAVDRVNAADGTYNVLFLGTDRGTVQKVVVLPTNSSARSELILEELEVFKNHAPITTMKISSKKQQLYVSSNEGLAQVSLHRCHIYGSACADCCLARDPYCAWDGHSCSRFYPTGKRRSRRQDVRHGNPLTQCRGFNLKAYRNAAEIVQYGVKNNTTFLECAPKSPQASIKWLLQKDKDRRKEVKLNERIIATSQGLLIRSVQDSDQGLYHCIATENSFKQTIAKINFKVLDSEMVAVVTDKWSPWTWASSVRALPFHPKDIMGAFSHSEMQMINQYCKDTRQQHQQGEESQKMRGDYGKLKALINSRKSRNRRNQLPES.

Positions 1 to 21 are cleaved as a signal peptide; that stretch reads MAFQAVCILVGVFVCSTYVKG. The Sema domain maps to 28–511; it reads RVYLTFDELR…SNEGLAQVSL (484 aa). A glycan (N-linked (GlcNAc...) asparagine) is linked at asparagine 81. An intrachain disulfide couples cysteine 101 to cysteine 112. Asparagine 123 carries an N-linked (GlcNAc...) asparagine glycan. Intrachain disulfides connect cysteine 130-cysteine 139, cysteine 266-cysteine 378, and cysteine 290-cysteine 338. N-linked (GlcNAc...) asparagine glycosylation is present at asparagine 268. Asparagine 465 is a glycosylation site (N-linked (GlcNAc...) asparagine). Cysteine 514 and cysteine 532 are joined by a disulfide. Positions 571 to 655 constitute an Ig-like C2-type domain; the sequence is AYRNAAEIVQ…TENSFKQTIA (85 aa). Asparagine 585 and asparagine 586 each carry an N-linked (GlcNAc...) asparagine glycan. A disulfide bridge connects residues cysteine 592 and cysteine 643. Positions 712-731 are enriched in basic and acidic residues; that stretch reads TRQQHQQGEESQKMRGDYGK. The segment at 712-751 is disordered; it reads TRQQHQQGEESQKMRGDYGKLKALINSRKSRNRRNQLPES.

It belongs to the semaphorin family. As to quaternary structure, interacts with PLXND1.

The protein resides in the secreted. Functionally, binds to plexin family members and plays an important role in the regulation of developmental processes. Required for normal cardiovascular development during embryogenesis. Functions as attractant for growing axons, and thereby plays an important role in axon growth and axon guidance. The chain is Semaphorin-3C (SEMA3C) from Bos taurus (Bovine).